Reading from the N-terminus, the 407-residue chain is Substance-P receptor (407 aa).

Residues 1-31 (MDNVLPGDSDLFPNISTNSSESNQFVQPAWQ) are Extracellular-facing. Residues asparagine 14 and asparagine 18 are each glycosylated (N-linked (GlcNAc...) asparagine). The chain crosses the membrane as a helical span at residues 32–54 (IVLWAAAYTVIVVTSVVGNVVVM). The Cytoplasmic segment spans residues 55-64 (WIILAHKRMR). A helical transmembrane segment spans residues 65 to 86 (TVTNYFLVNLAFAEASMAAFNT). The Extracellular segment spans residues 87 to 106 (VVNFTYAVHNEWYYGLFYCK). The N-linked (GlcNAc...) asparagine glycan is linked to asparagine 89. A disulfide bond links cysteine 105 and cysteine 180. Residues 107–128 (FHNFFPIAAVFASIYSMTAVAF) traverse the membrane as a helical segment. Topologically, residues 129–148 (DRYMAIIHPLQPRLSATATK) are cytoplasmic. Residues 149–169 (VVIFVIWVLALLLAFPQGYYS) form a helical membrane-spanning segment. Residues 170–194 (TTETMPGRVVCMIEWPEHPNRTYEK) lie on the Extracellular side of the membrane. Asparagine 189 carries an N-linked (GlcNAc...) asparagine glycan. Residues 195–219 (AYHICVTVLIYFLPLLVIGYAYTVV) form a helical membrane-spanning segment. Over 220-248 (GITLWASEIPGDSSDRYHEQVSAKRKVVK) the chain is Cytoplasmic. Residues 249-270 (MMIVVVCTFAICWLPFHVFFLL) form a helical membrane-spanning segment. Residues 271–283 (PYINPDLYVKKFI) lie on the Extracellular side of the membrane. Residues 284 to 308 (QQVYLAIMWLAMSSTMYNPIIYCCL) traverse the membrane as a helical segment. At 309 to 407 (NDRFRLGFKH…SSSFYSNMLA (99 aa)) the chain is on the cytoplasmic side. Cysteine 322 carries the S-palmitoyl cysteine lipid modification. The interval 365–407 (HEDEAEEGPKATPSSLDLTSNGSSRSNSKTMTESSSFYSNMLA) is disordered. The span at 376–407 (TPSSLDLTSNGSSRSNSKTMTESSSFYSNMLA) shows a compositional bias: polar residues.

The protein belongs to the G-protein coupled receptor 1 family. As to quaternary structure, interacts with ARRB1.

Its subcellular location is the cell membrane. Functionally, this is a receptor for the tachykinin neuropeptide substance P. It is probably associated with G proteins that activate a phosphatidylinositol-calcium second messenger system. The chain is Substance-P receptor (TACR1) from Meriones unguiculatus (Mongolian jird).